A 620-amino-acid chain; its full sequence is 1-deoxy-D-xylulose-5-phosphate synthase (620 aa).

Thiamine diphosphate-binding positions include His-80 and 121–123 (GHS). Residue Asp-152 coordinates Mg(2+). Residues 153–154 (GA), Asn-181, Tyr-288, and Glu-370 each bind thiamine diphosphate. Residue Asn-181 participates in Mg(2+) binding.

The protein belongs to the transketolase family. DXPS subfamily. Homodimer. The cofactor is Mg(2+). Requires thiamine diphosphate as cofactor.

The enzyme catalyses D-glyceraldehyde 3-phosphate + pyruvate + H(+) = 1-deoxy-D-xylulose 5-phosphate + CO2. It functions in the pathway metabolic intermediate biosynthesis; 1-deoxy-D-xylulose 5-phosphate biosynthesis; 1-deoxy-D-xylulose 5-phosphate from D-glyceraldehyde 3-phosphate and pyruvate: step 1/1. Catalyzes the acyloin condensation reaction between C atoms 2 and 3 of pyruvate and glyceraldehyde 3-phosphate to yield 1-deoxy-D-xylulose-5-phosphate (DXP). The polypeptide is 1-deoxy-D-xylulose-5-phosphate synthase (Shigella boydii serotype 18 (strain CDC 3083-94 / BS512)).